The primary structure comprises 140 residues: Putative pre-16S rRNA nuclease (140 aa).

It belongs to the YqgF nuclease family.

It localises to the cytoplasm. Functionally, could be a nuclease involved in processing of the 5'-end of pre-16S rRNA. This is Putative pre-16S rRNA nuclease from Chlorobium chlorochromatii (strain CaD3).